A 413-amino-acid polypeptide reads, in one-letter code: Arginine biosynthesis bifunctional protein ArgJ (413 aa).

Substrate is bound by residues Thr-160, Lys-186, Thr-197, Glu-284, Asn-408, and Ser-413. The active-site Nucleophile is Thr-197.

It belongs to the ArgJ family. Heterotetramer of two alpha and two beta chains.

Its subcellular location is the cytoplasm. It catalyses the reaction N(2)-acetyl-L-ornithine + L-glutamate = N-acetyl-L-glutamate + L-ornithine. The catalysed reaction is L-glutamate + acetyl-CoA = N-acetyl-L-glutamate + CoA + H(+). It participates in amino-acid biosynthesis; L-arginine biosynthesis; L-ornithine and N-acetyl-L-glutamate from L-glutamate and N(2)-acetyl-L-ornithine (cyclic): step 1/1. It functions in the pathway amino-acid biosynthesis; L-arginine biosynthesis; N(2)-acetyl-L-ornithine from L-glutamate: step 1/4. Functionally, catalyzes two activities which are involved in the cyclic version of arginine biosynthesis: the synthesis of N-acetylglutamate from glutamate and acetyl-CoA as the acetyl donor, and of ornithine by transacetylation between N(2)-acetylornithine and glutamate. This chain is Arginine biosynthesis bifunctional protein ArgJ, found in Burkholderia mallei (strain ATCC 23344).